The sequence spans 225 residues: NAD(P)H-quinone oxidoreductase subunit K, chloroplastic (225 aa).

The [4Fe-4S] cluster site is built by Cys43, Cys44, Cys108, and Cys139.

The protein belongs to the complex I 20 kDa subunit family. In terms of assembly, NDH is composed of at least 16 different subunits, 5 of which are encoded in the nucleus. [4Fe-4S] cluster serves as cofactor.

Its subcellular location is the plastid. It is found in the chloroplast thylakoid membrane. It carries out the reaction a plastoquinone + NADH + (n+1) H(+)(in) = a plastoquinol + NAD(+) + n H(+)(out). It catalyses the reaction a plastoquinone + NADPH + (n+1) H(+)(in) = a plastoquinol + NADP(+) + n H(+)(out). Functionally, NDH shuttles electrons from NAD(P)H:plastoquinone, via FMN and iron-sulfur (Fe-S) centers, to quinones in the photosynthetic chain and possibly in a chloroplast respiratory chain. The immediate electron acceptor for the enzyme in this species is believed to be plastoquinone. Couples the redox reaction to proton translocation, and thus conserves the redox energy in a proton gradient. This Arabidopsis thaliana (Mouse-ear cress) protein is NAD(P)H-quinone oxidoreductase subunit K, chloroplastic.